Reading from the N-terminus, the 583-residue chain is CD166 antigen (583 aa).

Residues 1–27 (MASKGSPSCRLVFCLLISAAVLRPGLG) form the signal peptide. 2 Ig-like V-type domains span residues 28-120 (WYTV…TEDN) and 125-234 (PTLV…KTIY). At 28–527 (WYTVNSAYGD…NREKVNDQAK (500 aa)) the chain is on the extracellular side. 2 disulfides stabilise this stretch: Cys43-Cys113 and Cys157-Cys220. N-linked (GlcNAc...) asparagine glycans are attached at residues Asn95, Asn167, Asn265, Asn306, Asn361, Asn457, Asn480, and Asn499. Ig-like C2-type domains follow at residues 245–328 (PTEQ…TTIT), 333–409 (DLSL…ESLT), and 416–501 (PQIK…LNVS). 3 cysteine pairs are disulfide-bonded: Cys270–Cys313, Cys354–Cys392, and Cys435–Cys485. The chain crosses the membrane as a helical span at residues 528-549 (LIVGIVVGLLLAALVAGVVYWL). Topologically, residues 550 to 583 (YMKKSKTASKHVNKDLGNMEENKKLEENNHKTEA) are cytoplasmic. A disordered region spans residues 562–583 (NKDLGNMEENKKLEENNHKTEA). The segment covering 569–583 (EENKKLEENNHKTEA) has biased composition (basic and acidic residues).

Homodimer. Interacts (via extracellular domain) with CD6 (via extracellular domain). Homodimerization and interaction with CD6 involve the same region and cannot occur simultaneously. The affinity for CD6 is much higher than the affinity for self-association. Interacts (via glycosylated extracellular domain) with LGALS1 and LGALS3. Interaction with LGALS1 or LGALS3 inhibits interaction with CD6. Post-translationally, the N-terminus is blocked. Glycosylated. Strongest expression in the lung, then brain, liver, and kidney. Present in the somatosensory system, basal ganglia, cortex, olfactory system, and circumventricular organs.

Its subcellular location is the cell membrane. The protein localises to the cell projection. It is found in the axon. It localises to the dendrite. Functionally, cell adhesion molecule that mediates both heterotypic cell-cell contacts via its interaction with CD6, as well as homotypic cell-cell contacts. Promotes T-cell activation and proliferation via its interactions with CD6. Contributes to the formation and maturation of the immunological synapse via its interactions with CD6. Mediates homotypic interactions with cells that express ALCAM. Mediates attachment of dendritic cells onto endothelial cells via homotypic interaction. Inhibits endothelial cell migration and promotes endothelial tube formation via homotypic interactions. Required for normal organization of the lymph vessel network. Required for normal hematopoietic stem cell engraftment in the bone marrow. Plays a role in hematopoiesis; required for normal numbers of hematopoietic stem cells in bone marrow. Promotes in vitro osteoblast proliferation and differentiation. Promotes neurite extension, axon growth and axon guidance; axons grow preferentially on surfaces that contain ALCAM. Mediates outgrowth and pathfinding for retinal ganglion cell axons. This chain is CD166 antigen (Alcam), found in Rattus norvegicus (Rat).